Reading from the N-terminus, the 112-residue chain is Colipase (112 aa).

The N-terminal stretch at Met1–Ala17 is a signal peptide. Positions Val18–Arg22 are cleaved as a propeptide — enterostatin, activation peptide. 5 cysteine pairs are disulfide-bonded: Cys34/Cys45, Cys40/Cys56, Cys44/Cys78, Cys66/Cys86, and Cys80/Cys104.

The protein belongs to the colipase family. In terms of assembly, forms a 1:1 stoichiometric complex with pancreatic lipase.

The protein resides in the secreted. Colipase is a cofactor of pancreatic lipase. It allows the lipase to anchor itself to the lipid-water interface. Without colipase the enzyme is washed off by bile salts, which have an inhibitory effect on the lipase. Functionally, enterostatin has a biological activity as a satiety signal. This Bos taurus (Bovine) protein is Colipase (CLPS).